Reading from the N-terminus, the 284-residue chain is NAD kinase (284 aa).

The Proton acceptor role is filled by Asp-70. NAD(+) contacts are provided by residues 70 to 71 (DG), 139 to 140 (NE), Lys-167, Asp-169, Leu-177, 180 to 185 (TAYNLS), and Gln-236.

Belongs to the NAD kinase family. A divalent metal cation serves as cofactor.

Its subcellular location is the cytoplasm. The catalysed reaction is NAD(+) + ATP = ADP + NADP(+) + H(+). Involved in the regulation of the intracellular balance of NAD and NADP, and is a key enzyme in the biosynthesis of NADP. Catalyzes specifically the phosphorylation on 2'-hydroxyl of the adenosine moiety of NAD to yield NADP. The sequence is that of NAD kinase from Helicobacter pylori (strain G27).